Here is a 121-residue protein sequence, read N- to C-terminus: Flagellar protein FliT (121 aa).

The tract at residues 1 to 50 (MNNAPHLYFAWQQLVEKSQLMLRLATEEQWDELIASEMAYVNAVQEIAHL) is required for homodimerization. The interval 60–98 (MQEQLRPMLLLILDNESKVKQLLQIRMDELAKLVGQSSV) is fliD binding.

It belongs to the FliT family. Homodimer. Interacts with FliD and FlhC.

It localises to the cytoplasm. The protein localises to the cytosol. In terms of biological role, dual-function protein that regulates the transcription of class 2 flagellar operons and that also acts as an export chaperone for the filament-capping protein FliD. As a transcriptional regulator, acts as an anti-FlhDC factor; it directly binds FlhC, thus inhibiting the binding of the FlhC/FlhD complex to class 2 promoters, resulting in decreased expression of class 2 flagellar operons. As a chaperone, effects FliD transition to the membrane by preventing its premature polymerization, and by directing it to the export apparatus. The polypeptide is Flagellar protein FliT (Escherichia coli O6:K15:H31 (strain 536 / UPEC)).